A 470-amino-acid chain; its full sequence is Cupincin (470 aa).

The signal sequence occupies residues 1 to 34 (MAKKKTSSSMARSQLAALLISLCFLSLASNAVGW). The span at 36-52 (RRGEREEEDERRRHGGE) shows a compositional bias: basic and acidic residues. Disordered stretches follow at residues 36–57 (RRGE…GRPY) and 240–261 (KSCS…PSSL). Cupin type-1 domains lie at 57 to 215 (YHFG…EELE) and 259 to 445 (SSLT…AREA). An N-linked (GlcNAc...) asparagine glycan is attached at N297. A disordered region spans residues 330 to 368 (PHVSGGGSSERREREREHGRRREEEQGEEEHGERGEKAR). The span at 338-367 (SERREREREHGRRREEEQGEEEHGERGEKA) shows a compositional bias: basic and acidic residues. Positions 347, 352, and 360 each coordinate Zn(2+).

It belongs to the 7S seed storage protein family. As to quaternary structure, homotrimer. The cofactor is Zn(2+).

It localises to the secreted. Its function is as follows. Seed storage protein. Globulin-like protein that acts as a zinc metalloprotease. Cleaves specifically between Leu-15 and Tyr-16 of insulin B chain, and Gln-1 and Leu-2 of neurotensin (NT) peptide in vitro. May play a role as an initiating endopeptidase in germinating seeds. In Oryza sativa subsp. indica (Rice), this protein is Cupincin.